The primary structure comprises 633 residues: Probable potassium transport system protein Kup 2 (633 aa).

Helical transmembrane passes span 18–38 (FLALTIGAIGVVYGDIGTSPL), 61–81 (LVSLVLWTLTAIVTIKYVLFL), 107–127 (PVLMFFAGVLGAALFIGDAMI), 143–163 (VAPALHDYVLPISVVIILLLF), 173–193 (VSVFFGPITLVWFLMMAAAGV), 211–231 (AIGFLWNAGLIGFIVLGAIFL), 255–275 (WFAVVFPALALNYLGQGALVL), 287–307 (LMFPNWALLPMVILATAATII), 345–365 (IYLPLVNTILLTGVLALMLMF), 371–391 (LAPAYGVSITGAMVIDTILAF), 402–422 (ALTAIAVLLPLFNLELVFLGA), and 427–447 (VHHGGYVPILIAGTLITMMWT).

This sequence belongs to the HAK/KUP transporter (TC 2.A.72) family.

The protein localises to the cell inner membrane. The catalysed reaction is K(+)(in) + H(+)(in) = K(+)(out) + H(+)(out). Functionally, transport of potassium into the cell. Likely operates as a K(+):H(+) symporter. The polypeptide is Probable potassium transport system protein Kup 2 (Rhizobium meliloti (strain 1021) (Ensifer meliloti)).